The primary structure comprises 201 residues: Small ribosomal subunit protein uS4c (201 aa).

The interval 15–43 (LGALPGLTRKRPRSGSDLRNQSRSGKRSQ) is disordered. Positions 89 to 150 (MRLDNILFRL…EQRSRALIQN (62 aa)) constitute an S4 RNA-binding domain.

Belongs to the universal ribosomal protein uS4 family. In terms of assembly, part of the 30S ribosomal subunit. Contacts protein S5. The interaction surface between S4 and S5 is involved in control of translational fidelity.

It localises to the plastid. Its subcellular location is the chloroplast. Functionally, one of the primary rRNA binding proteins, it binds directly to 16S rRNA where it nucleates assembly of the body of the 30S subunit. In terms of biological role, with S5 and S12 plays an important role in translational accuracy. This Drimys granadensis protein is Small ribosomal subunit protein uS4c (rps4).